Reading from the N-terminus, the 255-residue chain is Phosphate import ATP-binding protein PstB (255 aa).

Positions 9 to 250 constitute an ABC transporter domain; that stretch reads IAVQNLNFYY…PKIQRTEDYI (242 aa). 41–48 contributes to the ATP binding site; sequence GPSGCGKS.

This sequence belongs to the ABC transporter superfamily. Phosphate importer (TC 3.A.1.7) family. In terms of assembly, the complex is composed of two ATP-binding proteins (PstB), two transmembrane proteins (PstC and PstA) and a solute-binding protein (PstS).

The protein localises to the cell inner membrane. The catalysed reaction is phosphate(out) + ATP + H2O = ADP + 2 phosphate(in) + H(+). Part of the ABC transporter complex PstSACB involved in phosphate import. Responsible for energy coupling to the transport system. This chain is Phosphate import ATP-binding protein PstB, found in Haemophilus influenzae (strain 86-028NP).